A 342-amino-acid chain; its full sequence is Nucleoid-associated protein Shewmr4_2217 (342 aa).

Belongs to the YejK family.

It localises to the cytoplasm. The protein resides in the nucleoid. In Shewanella sp. (strain MR-4), this protein is Nucleoid-associated protein Shewmr4_2217.